The primary structure comprises 397 residues: Zinc finger transcription factor family protein 30 (397 aa).

Positions 1–40 (MKLEDDKIHSPTNTEEEGYGSDVEVENGTDISGSKGGSGV) are disordered. A compositionally biased stretch (acidic residues) spans 14–27 (TEEEGYGSDVEVEN). 3 C2H2-type zinc fingers span residues 51 to 74 (FRCSICSKVFCHSSSLSRHRMQAH), 78 to 102 (YKCTVCRKDISSSESLRTHMFKQHH), and 107 to 125 (YMCRCCNWAFPDKSLLHIH).

It localises to the nucleus. The protein is Zinc finger transcription factor family protein 30 (ztf-30) of Caenorhabditis elegans.